We begin with the raw amino-acid sequence, 163 residues long: Phosphopantetheine adenylyltransferase (163 aa).

Residue Ser-10 participates in substrate binding. Residues 10–11 (SF) and His-18 each bind ATP. The substrate site is built by Lys-42, Leu-74, and Arg-88. ATP-binding positions include 89-91 (GLR), Glu-99, and 124-130 (YSFLSSS).

Belongs to the bacterial CoaD family. In terms of assembly, homohexamer. The cofactor is Mg(2+).

The protein resides in the cytoplasm. It carries out the reaction (R)-4'-phosphopantetheine + ATP + H(+) = 3'-dephospho-CoA + diphosphate. It participates in cofactor biosynthesis; coenzyme A biosynthesis; CoA from (R)-pantothenate: step 4/5. Functionally, reversibly transfers an adenylyl group from ATP to 4'-phosphopantetheine, yielding dephospho-CoA (dPCoA) and pyrophosphate. In Bacillus anthracis (strain A0248), this protein is Phosphopantetheine adenylyltransferase.